Consider the following 293-residue polypeptide: uncharacterized protein (293 aa).

The next 7 membrane-spanning stretches (helical) occupy residues 55 to 75 (FLLC…VFLC), 77 to 97 (TGFM…LLHG), 110 to 130 (PGLL…ASAC), 138 to 158 (FSGL…GLAG), 164 to 184 (WQVI…ALYL), 193 to 213 (LFLG…VFDT), and 226 to 246 (LLTL…LILF). Asn-287 carries N-linked (GlcNAc...) asparagine; by host glycosylation.

It belongs to the cytomegalovirus US12 family.

Its subcellular location is the membrane. This is an uncharacterized protein from Human cytomegalovirus (strain AD169) (HHV-5).